A 231-amino-acid polypeptide reads, in one-letter code: Response regulator MprA (231 aa).

In terms of domain architecture, Response regulatory spans 4–118; sequence RILVVDDDRA…ELLARMRALL (115 aa). At aspartate 48 the chain carries 4-aspartylphosphate. Positions 130 to 228 form a DNA-binding region, ompR/PhoB-type; the sequence is SAAMTFSDLS…VRGVGYVLRE (99 aa).

Phosphorylated and dephosphorylated by MprB.

It is found in the cytoplasm. Functionally, member of the two-component regulatory system MprB/MprA which contributes to maintaining a balance among several systems involved in stress resistance and is required for establishment and maintenance of persistent infection in the host. Functions as a transcriptional regulator that recognizes a 19-bp nucleotide motif comprizing two loosely conserved 8-bp direct DNA-binding motif repeats separated by a 3-bp spacer region. This chain is Response regulator MprA (mprA), found in Mycolicibacterium vanbaalenii (strain DSM 7251 / JCM 13017 / BCRC 16820 / KCTC 9966 / NRRL B-24157 / PYR-1) (Mycobacterium vanbaalenii).